A 767-amino-acid chain; its full sequence is Transducin-like enhancer protein 2 (767 aa).

The tract at residues 1 to 152 is q domain; that stretch reads MYPQGRHPTP…SLLGQQNQLQ (152 aa). Residues 153-215 are GP domain; sequence PLSHAPPVPL…SRVDRAASRS (63 aa). Residues 198 to 212 are compositionally biased toward basic and acidic residues; that stretch reads RVGVDAEGSRVDRAA. 3 disordered regions span residues 198–257, 264–283, and 296–346; these read RVGV…EEDK, VDED…CGKA, and SPAS…SSAS. The tract at residues 216–279 is ccN domain; it reads SSPSPPESLV…SEPPSPVTTP (64 aa). Residues 238–242 carry the Nuclear localization signal motif; sequence KQQRA. Ser253 bears the Phosphoserine; by CK2 mark. Ser274 bears the Phosphoserine; by CDK1 mark. The residue at position 278 (Thr278) is a Phosphothreonine; by CDK1. Residues 280–447 are SP domain; the sequence is CGKAPLCIPA…VAKPAYSFHV (168 aa). A compositionally biased stretch (low complexity) spans 296–309; it reads SPASLASSLGSPLP. Ser306 is subject to Phosphoserine. Over residues 323–346 the composition is skewed to polar residues; it reads TPASRSCGTSPPQDSSTPGPSSAS. 6 WD repeats span residues 479–517, 525–564, 569–608, 611–650, 693–732, and 734–766; these read AHGE…SKTP, NRDN…PRIK, SSAP…MVRQ, GHTD…QLQQ, LHES…SIFQ, and KESS…YEVV.

This sequence belongs to the WD repeat Groucho/TLE family. As to quaternary structure, homooligomer and heterooligomer with other family members. Binds LEF1, TCF7, TCF7L1, TCF7L2, UTY, HES1 and HES5. Post-translationally, ubiquitinated by XIAP/BIRC4. As to expression, expressed in bone marrow-derived macrophages.

The protein resides in the nucleus. In terms of biological role, transcriptional corepressor that binds to a number of transcription factors. Inhibits the transcriptional activation mediated by CTNNB1 and TCF family members in Wnt signaling. The effects of full-length TLE family members may be modulated by association with dominant-negative AES. The sequence is that of Transducin-like enhancer protein 2 (Tle2) from Mus musculus (Mouse).